Reading from the N-terminus, the 151-residue chain is Ribonuclease H (151 aa).

In terms of domain architecture, RNase H type-1 spans 1-141; sequence MQEVTVYSDG…ADALANKGVE (141 aa). 4 residues coordinate Mg(2+): aspartate 9, glutamate 47, aspartate 69, and aspartate 133.

Belongs to the RNase H family. As to quaternary structure, monomer. The cofactor is Mg(2+).

The protein localises to the cytoplasm. The enzyme catalyses Endonucleolytic cleavage to 5'-phosphomonoester.. Endonuclease that specifically degrades the RNA of RNA-DNA hybrids. The sequence is that of Ribonuclease H from Ralstonia nicotianae (strain ATCC BAA-1114 / GMI1000) (Ralstonia solanacearum).